A 466-amino-acid polypeptide reads, in one-letter code: Cysteine--tRNA ligase (466 aa).

A Zn(2+)-binding site is contributed by Cys30. The 'HIGH' region signature appears at Pro32 to Asn42. Zn(2+) contacts are provided by Cys210, His235, and Glu239. The 'KMSKS' region motif lies at Lys267–Ser271. ATP is bound at residue Lys270. The residue at position 271 (Ser271) is a Phosphoserine.

The protein belongs to the class-I aminoacyl-tRNA synthetase family. As to quaternary structure, monomer. Zn(2+) serves as cofactor.

The protein localises to the cytoplasm. It catalyses the reaction tRNA(Cys) + L-cysteine + ATP = L-cysteinyl-tRNA(Cys) + AMP + diphosphate. This is Cysteine--tRNA ligase from Geobacillus sp. (strain WCH70).